A 369-amino-acid chain; its full sequence is Flagellar P-ring protein (369 aa).

The signal sequence occupies residues Met1–Ala22.

The protein belongs to the FlgI family. As to quaternary structure, the basal body constitutes a major portion of the flagellar organelle and consists of four rings (L,P,S, and M) mounted on a central rod.

It localises to the periplasm. Its subcellular location is the bacterial flagellum basal body. Assembles around the rod to form the L-ring and probably protects the motor/basal body from shearing forces during rotation. The polypeptide is Flagellar P-ring protein (Pseudomonas savastanoi pv. phaseolicola (strain 1448A / Race 6) (Pseudomonas syringae pv. phaseolicola (strain 1448A / Race 6))).